The sequence spans 461 residues: Cysteine--tRNA ligase (461 aa).

Residue cysteine 28 coordinates Zn(2+). The 'HIGH' region signature appears at 30-40 (ITVYDLCHIGH). Zn(2+) is bound by residues cysteine 209, histidine 234, and glutamate 238. The short motif at 266–270 (KMSKS) is the 'KMSKS' region element. Lysine 269 contacts ATP.

Belongs to the class-I aminoacyl-tRNA synthetase family. Monomer. The cofactor is Zn(2+).

It localises to the cytoplasm. The enzyme catalyses tRNA(Cys) + L-cysteine + ATP = L-cysteinyl-tRNA(Cys) + AMP + diphosphate. This Shigella sonnei (strain Ss046) protein is Cysteine--tRNA ligase.